A 619-amino-acid chain; its full sequence is MYGFVNHALELLVIRNYGPEVWEDIKKEAQLDEEGQFLVRIIYDDSKTYDLVAAASKVLNLNAGEILQMFGKMFFVFCQESGYDTILRVLGSNVREFLQNLDALHDHLATIYPGMRAPSFRCTDAEKGKGLILHYYSEREGLQDIVIGIIKTVAQQIHGTEIDMKVIQQRSEECDHTQFLIEEKESKEEDFYEDLDRFEENGTQDSRISPYTFCKAFPFHIIFDRDLVVTQCGNAIYRVLPQLQPGKCSLLSVFSLVRPHIDISFHGILSHINTVFVLRSKEGLLDVEKLECEDELTGAEISCLRLKGQMIYLPEADSILFLCSPSVMNLDDLTRRGLYLSDIPLHDATRDLVLLGEQFREEYKLTQELEILTDRLQLTLRALEDEKKKTDTLLYSVLPPSVANELRHKRPVPAKRYDNVTILFSGIVGFNAFCSKHASGEGAMKIVNLLNDLYTRFDTLTDSRKNPFVYKVETVGDKYMTVSGLPEPCIHHARSICHLALDMMEIAGQVQVDGESVQITIGIHTGEVVTGVIGQRMPRYCLFGNTVNLTSRTETTGEKGKINVSEYTYRCLMSPENSDPQFHLEHRGPVSMKGKKEPMQVWFLSRKNTGTEETNQDEN.

His105 is a heme binding site. Positions 421–554 (TILFSGIVGF…NTVNLTSRTE (134 aa)) constitute a Guanylate cyclase domain.

It belongs to the adenylyl cyclase class-4/guanylyl cyclase family. In terms of assembly, the active enzyme is formed by a heterodimer of an alpha and a beta subunit. Homotetramer; dimer of dimers (in vitro). Heterodimer with GUCY1A1. Can also form inactive homodimers in vitro. Requires heme as cofactor. Lung and brain.

Its subcellular location is the cytoplasm. It carries out the reaction GTP = 3',5'-cyclic GMP + diphosphate. Its activity is regulated as follows. Activated by nitric oxide in the presence of magnesium or manganese ions. Mediates responses to nitric oxide (NO) by catalyzing the biosynthesis of the signaling molecule cGMP. This Rattus norvegicus (Rat) protein is Guanylate cyclase soluble subunit beta-1 (Gucy1b1).